Consider the following 341-residue polypeptide: Homeobox protein mls-2 (341 aa).

Disordered regions lie at residues 1–78 (MPTS…DSTN) and 139–209 (SNPD…TVFS). Over residues 64-78 (TTQSSPSASSEDSTN) the composition is skewed to polar residues. Residues 153 to 166 (KDEKSEGKDGETRD) show a composition bias toward basic and acidic residues. Positions 201-260 (KKKTRTVFSRSQVSQLEMMFECKRYLSSQERSNLAQKLHLTETQVKIWFQNRRNKFKRQA) form a DNA-binding region, homeobox.

This sequence belongs to the HMX homeobox family. In terms of tissue distribution, expressed in a subset of head neurons, including AIM and ASK (at protein level).

It localises to the nucleus. Functionally, transcription factor that binds to the promoter of target genes. Regulates fate specification and/or differentiation of multiple cell types arising from the embryonic mesodermal (M) lineage and the ABp(l/r)paa precursors. In the postembryonic M lineage, regulates cleavage orientation, cell proliferation and cell fate specification. Regulates hlh-1 expression to specify coelomocyte fate in the mesodermal (M) lineage. In AWC neurons, initiates expression of ceh-36, leading to the expression of terminal differentiation genes. Regulates ventral cephalic sheath (CEPsh) glia differentiation and expression of transcription factor hlh-17 in CEPsh glia. Promotes terminal differentiation and morphogenesis of the epithelial duct and pore cells. In the duct cell, cooperates with the EGF-Ras-ERK pathway in turning on the terminal differentiation gene lin-48. The sequence is that of Homeobox protein mls-2 from Caenorhabditis elegans.